Reading from the N-terminus, the 222-residue chain is Glutathione S-transferase U21 (222 aa).

The GST N-terminal domain maps to 3–83 (AEVILLGFWP…YIDEVWSDNN (81 aa)). Glutathione is bound by residues 13–14 (SM), 40–41 (NK), 54–55 (TI), and 67–68 (ES). A GST C-terminal domain is found at 89-211 (DPYHRAQALF…LPDSEKVVGY (123 aa)).

The protein belongs to the GST superfamily. Tau family.

The protein resides in the cytoplasm. It localises to the cytosol. It catalyses the reaction RX + glutathione = an S-substituted glutathione + a halide anion + H(+). Functionally, may be involved in the conjugation of reduced glutathione to a wide number of exogenous and endogenous hydrophobic electrophiles and have a detoxification role against certain herbicides. This is Glutathione S-transferase U21 (GSTU21) from Arabidopsis thaliana (Mouse-ear cress).